The sequence spans 173 residues: NADH-ubiquinone oxidoreductase chain 6 (173 aa).

A run of 5 helical transmembrane segments spans residues 1–21 (MTYF…AVAS), 27–47 (YGVV…LSLG), 48–68 (VSFV…VVFV), 91–111 (GVGF…IGCL), and 141–161 (VGMF…VLEL).

Belongs to the complex I subunit 6 family.

Its subcellular location is the mitochondrion membrane. It carries out the reaction a ubiquinone + NADH + 5 H(+)(in) = a ubiquinol + NAD(+) + 4 H(+)(out). Core subunit of the mitochondrial membrane respiratory chain NADH dehydrogenase (Complex I) that is believed to belong to the minimal assembly required for catalysis. Complex I functions in the transfer of electrons from NADH to the respiratory chain. The immediate electron acceptor for the enzyme is believed to be ubiquinone. In Fratercula arctica (Atlantic puffin), this protein is NADH-ubiquinone oxidoreductase chain 6 (MT-ND6).